The following is a 301-amino-acid chain: Transcription elongation factor A protein 1 (301 aa).

An N-acetylmethionine modification is found at M1. The TFIIS N-terminal domain occupies D3–P80. Residue K55 forms a Glycyl lysine isopeptide (Lys-Gly) (interchain with G-Cter in ubiquitin) linkage. 4 positions are modified to phosphoserine: S57, S81, S97, and S100. Residues L76 to P93 show a composition bias toward basic and acidic residues. The segment at L76–S139 is disordered. One can recognise a TFIIS central domain in the interval V140–T256. The TFIIS-type zinc finger occupies D259–K299. Zn(2+) is bound by residues C263, C266, C291, and C294.

Belongs to the TFS-II family. Interacts with EAF2. Associates with UBR5 and forms a transcription regulatory complex made of CDK9, Pol II, UBR5 and TCEA1/TFIIS. Part of TBP-based Pol II pre-initiation complex (PIC), in which Pol II core assembles with general transcription factors and other specific initiation factors including GTF2E1, GTF2E2, GTF2F1, GTF2F2, TCEA1, ERCC2, ERCC3, GTF2H2, GTF2H3, GTF2H4, GTF2H5, GTF2A1, GTF2A2, GTF2B and TBP; this large multi-subunit PIC complex mediates DNA unwinding and targets Pol II core to the transcription start site where the first phosphodiester bond forms.

The protein resides in the nucleus. In terms of biological role, necessary for efficient RNA polymerase II transcription elongation past template-encoded arresting sites. The arresting sites in DNA have the property of trapping a certain fraction of elongating RNA polymerases that pass through, resulting in locked ternary complexes. Cleavage of the nascent transcript by S-II allows the resumption of elongation from the new 3'-terminus. The sequence is that of Transcription elongation factor A protein 1 (Tcea1) from Mus musculus (Mouse).